The following is a 363-amino-acid chain: MSHPLTFLGIESSCDDTAAAVVRAAERAEILSSVVDGQAALHAPFGGVVPEIAARAHAERLDLCVERALQEAGLGLGDLDGIAVTAGPGLIGGVLSGVMLAKGLAAGTGLPLVGVNHLAGHALTPRLTDALAFPYLMLLVSGGHCQFLIARGAEAFSRLGGSIDDAPGEAFDKTAKLLGLPQPGGPSVEAEAATGDPRRFAFPRPMLDRPGCDMSFSGLKTALLRARDGIVAEKGGITRQDRADLCAGFQAAVVDVLAEKTRRALAIYAEEQAPVPALAVAGGVAANGPIRAALTRVAEEAGARFLAPPLRLCTDNAAMIAWAGIERFRAGGRDGMDLQARPRWPLDQSAPALIGSGRKGAKA.

2 residues coordinate Fe cation: histidine 117 and histidine 121. Residues 139–143, aspartate 172, glycine 185, and asparagine 287 contribute to the substrate site; that span reads LVSGG. Residue aspartate 315 coordinates Fe cation.

The protein belongs to the KAE1 / TsaD family. The cofactor is Fe(2+).

Its subcellular location is the cytoplasm. The catalysed reaction is L-threonylcarbamoyladenylate + adenosine(37) in tRNA = N(6)-L-threonylcarbamoyladenosine(37) in tRNA + AMP + H(+). In terms of biological role, required for the formation of a threonylcarbamoyl group on adenosine at position 37 (t(6)A37) in tRNAs that read codons beginning with adenine. Is involved in the transfer of the threonylcarbamoyl moiety of threonylcarbamoyl-AMP (TC-AMP) to the N6 group of A37, together with TsaE and TsaB. TsaD likely plays a direct catalytic role in this reaction. The protein is tRNA N6-adenosine threonylcarbamoyltransferase of Cereibacter sphaeroides (strain ATCC 17025 / ATH 2.4.3) (Rhodobacter sphaeroides).